Reading from the N-terminus, the 496-residue chain is Xylulose kinase (496 aa).

A substrate-binding site is contributed by 83–84; that stretch reads MH. Residue Asp-237 is the Proton acceptor of the active site.

It belongs to the FGGY kinase family.

The enzyme catalyses D-xylulose + ATP = D-xylulose 5-phosphate + ADP + H(+). In terms of biological role, catalyzes the phosphorylation of D-xylulose to D-xylulose 5-phosphate. This is Xylulose kinase from Staphylococcus epidermidis (strain ATCC 35984 / DSM 28319 / BCRC 17069 / CCUG 31568 / BM 3577 / RP62A).